A 340-amino-acid chain; its full sequence is 4-hydroxy-3-methylbut-2-enyl diphosphate reductase (340 aa).

C13 serves as a coordination point for [4Fe-4S] cluster. Residues H42 and H75 each coordinate (2E)-4-hydroxy-3-methylbut-2-enyl diphosphate. Residues H42 and H75 each coordinate dimethylallyl diphosphate. Residues H42 and H75 each coordinate isopentenyl diphosphate. C97 serves as a coordination point for [4Fe-4S] cluster. H125 is a binding site for (2E)-4-hydroxy-3-methylbut-2-enyl diphosphate. H125 lines the dimethylallyl diphosphate pocket. An isopentenyl diphosphate-binding site is contributed by H125. The active-site Proton donor is E127. T165 is a (2E)-4-hydroxy-3-methylbut-2-enyl diphosphate binding site. C195 provides a ligand contact to [4Fe-4S] cluster. The (2E)-4-hydroxy-3-methylbut-2-enyl diphosphate site is built by S223, S224, N225, and S267. Residues S223, S224, N225, and S267 each contribute to the dimethylallyl diphosphate site. Residues S223, S224, N225, and S267 each coordinate isopentenyl diphosphate. Positions 317–340 are disordered; the sequence is NNLDNKTAASEEADSLSNDTEQEA. A compositionally biased stretch (polar residues) spans 331–340; sequence SLSNDTEQEA.

This sequence belongs to the IspH family. [4Fe-4S] cluster serves as cofactor.

It carries out the reaction isopentenyl diphosphate + 2 oxidized [2Fe-2S]-[ferredoxin] + H2O = (2E)-4-hydroxy-3-methylbut-2-enyl diphosphate + 2 reduced [2Fe-2S]-[ferredoxin] + 2 H(+). It catalyses the reaction dimethylallyl diphosphate + 2 oxidized [2Fe-2S]-[ferredoxin] + H2O = (2E)-4-hydroxy-3-methylbut-2-enyl diphosphate + 2 reduced [2Fe-2S]-[ferredoxin] + 2 H(+). It functions in the pathway isoprenoid biosynthesis; dimethylallyl diphosphate biosynthesis; dimethylallyl diphosphate from (2E)-4-hydroxy-3-methylbutenyl diphosphate: step 1/1. Its pathway is isoprenoid biosynthesis; isopentenyl diphosphate biosynthesis via DXP pathway; isopentenyl diphosphate from 1-deoxy-D-xylulose 5-phosphate: step 6/6. Catalyzes the conversion of 1-hydroxy-2-methyl-2-(E)-butenyl 4-diphosphate (HMBPP) into a mixture of isopentenyl diphosphate (IPP) and dimethylallyl diphosphate (DMAPP). Acts in the terminal step of the DOXP/MEP pathway for isoprenoid precursor biosynthesis. The sequence is that of 4-hydroxy-3-methylbut-2-enyl diphosphate reductase from Zymomonas mobilis subsp. mobilis (strain ATCC 31821 / ZM4 / CP4).